Consider the following 665-residue polypeptide: MALLKVAPSRLLSRALQLASRVQNCTPTVTTARRNFHFTVYGRKDTSAKVSDSISTQYPVVDHEFDAVVVGAGGAGLRAAFGLSEAGFNTACITKLFPTRSHTVAAQGGINAALGNMEDDDWRWHFYDTVKGSDWLGDQDAIHYMTEQAPASVIELENYGMPFSRTEQGKIYQRAFGGQSLKYGKGGQAHRCCCVADRTGHSLLHTLYGRSLRYDTSYFVEYFALDLLMENGECRGVIALCMEDGSIHRFRAKNTVIATGGYGRTFFSCTSAHTSTGDGTAMVTRAGLPCQDLEFVQFHPTGIYGAGCLITEGCRGEGGILINSEGERFMERYAPVAKDLASRDVVSRSMTIEIREGRGCGKDKDHVYLQLHHLPPSQLASRLPGISETAMIFAGVDVTKEPIPVLPTVHYNMGGIPTNYKGQVITHVNGEDRVVPGLYSCGEAASASVHGANRLGANSLLDLVVFGRACALSIAESCKPGEAVPSIKENAGEESVANLDKLRYANGSTRTSEIRINMQKTMQNHAAVFRTGSVLKEGCEKLSVINSSMDDIKTFDRGIVWNTDLVETLELQNLMLCALQTINGAEARKESRGAHAREDYKVRIDEYDFSKPLQGQQKKSFNEHWRKHTLSYVDKKGKVSLEYRPVIDTTLNEDCASVPPAIRSY.

A mitochondrion-targeting transit peptide spans Met1–Asp45. FAD is bound by residues Ala72, Ala75, Thr94, Lys95, and Ser101. Position 102 is a tele-8alpha-FAD histidine (His102). FAD is bound by residues Thr103, Gly108, Ala224, and Asp278. His299, Arg343, and His410 together coordinate oxaloacetate. The active-site Proton acceptor is the Arg343. An FAD-binding site is contributed by Glu443. The oxaloacetate site is built by Arg454 and Ala457. FAD-binding residues include Ser459 and Leu460.

The protein belongs to the FAD-dependent oxidoreductase 2 family. FRD/SDH subfamily. In terms of assembly, component of complex II composed of four subunits: a flavoprotein (FP), an iron-sulfur protein (IP), and a cytochrome b composed of a large and a small subunit. Requires FAD as cofactor.

The protein localises to the mitochondrion inner membrane. The catalysed reaction is a ubiquinone + succinate = a ubiquinol + fumarate. It carries out the reaction (R)-malate + a quinone = enol-oxaloacetate + a quinol. The enzyme catalyses (S)-malate + a quinone = enol-oxaloacetate + a quinol. It participates in carbohydrate metabolism; tricarboxylic acid cycle; fumarate from succinate (eukaryal route): step 1/1. With respect to regulation, enol-oxaloacetate inhibits the succinate dehydrogenase activity. In terms of biological role, flavoprotein (FP) subunit of succinate dehydrogenase (SDH) that is involved in complex II of the mitochondrial electron transport chain and is responsible for transferring electrons from succinate to ubiquinone (coenzyme Q). SDH also oxidizes malate to the non-canonical enol form of oxaloacetate, enol-oxaloacetate. Enol-oxaloacetate, which is a potent inhibitor of the succinate dehydrogenase activity, is further isomerized into keto-oxaloacetate. The sequence is that of Succinate dehydrogenase [ubiquinone] flavoprotein subunit A, mitochondrial (sdha-a) from Xenopus laevis (African clawed frog).